Here is a 399-residue protein sequence, read N- to C-terminus: Argininosuccinate synthase (399 aa).

ATP is bound by residues 10 to 18 (AYSGGVDTS) and Ala-38. Tyr-89 contributes to the L-citrulline binding site. Position 119 (Gly-119) interacts with ATP. 3 residues coordinate L-aspartate: Thr-121, Asn-125, and Asp-126. Asn-125 contributes to the L-citrulline binding site. 5 residues coordinate L-citrulline: Arg-129, Ser-177, Ser-186, Glu-262, and Tyr-274.

This sequence belongs to the argininosuccinate synthase family. Type 1 subfamily. In terms of assembly, homotetramer.

Its subcellular location is the cytoplasm. The enzyme catalyses L-citrulline + L-aspartate + ATP = 2-(N(omega)-L-arginino)succinate + AMP + diphosphate + H(+). It participates in amino-acid biosynthesis; L-arginine biosynthesis; L-arginine from L-ornithine and carbamoyl phosphate: step 2/3. The polypeptide is Argininosuccinate synthase (Picosynechococcus sp. (strain ATCC 27264 / PCC 7002 / PR-6) (Agmenellum quadruplicatum)).